The following is a 156-amino-acid chain: Small ribosomal subunit protein uS7 (156 aa).

Belongs to the universal ribosomal protein uS7 family. Part of the 30S ribosomal subunit. Contacts proteins S9 and S11.

Functionally, one of the primary rRNA binding proteins, it binds directly to 16S rRNA where it nucleates assembly of the head domain of the 30S subunit. Is located at the subunit interface close to the decoding center, probably blocks exit of the E-site tRNA. This Geotalea uraniireducens (strain Rf4) (Geobacter uraniireducens) protein is Small ribosomal subunit protein uS7.